The following is a 745-amino-acid chain: Multiple C2 domain and transmembrane region protein 13 (745 aa).

A disordered region spans residues 1-30; that stretch reads MAANKDEFSVKQISPKLGGERGARNPYGPT. C2 domains are found at residues 21 to 139, 171 to 293, and 326 to 453; these read RGAR…PQRY, DASE…SAPA, and AEES…ACSY. Ca(2+) is bound by residues aspartate 56, aspartate 61, aspartate 106, and asparagine 110. The next 2 membrane-spanning stretches (helical) occupy residues 568–588 and 688–708; these read SLIVWLAIYLVVVPCIVLVGL and FYCWLICVLVALCWYNIPMWL.

It belongs to the MCTP family. It depends on Ca(2+) as a cofactor. In terms of tissue distribution, expressed in incipient leaf primordia.

The protein resides in the cell membrane. It is found in the cytoplasm. Its function is as follows. May function as a signaling molecule by regulating the trafficking of other regulators. The polypeptide is Multiple C2 domain and transmembrane region protein 13 (Arabidopsis thaliana (Mouse-ear cress)).